The primary structure comprises 414 residues: 26S proteasome regulatory subunit 8 homolog (414 aa).

Residue 197–204 coordinates ATP; the sequence is GPPGTGKT.

The protein belongs to the AAA ATPase family.

Its subcellular location is the cytoplasm. It localises to the nucleus. The 26S proteasome is involved in the ATP-dependent degradation of ubiquitinated proteins. The regulatory (or ATPase) complex confers ATP dependency and substrate specificity to the 26S complex. This is 26S proteasome regulatory subunit 8 homolog from Naegleria fowleri (Brain eating amoeba).